Reading from the N-terminus, the 780-residue chain is Ino eighty subunit 1 (780 aa).

2 disordered regions span residues 1–25 and 563–780; these read MADVESAGVDDSFAQSEPHDEQQIH and ANGP…PGWN. Residues 563 to 584 show a composition bias toward basic and acidic residues; the sequence is ANGPRRDRKKEREERQKAREEA. The segment covering 600–613 has biased composition (basic residues); it reads SRARAQRNAKRKLA. Positions 614 to 635 are enriched in low complexity; that stretch reads RAAAAASSTPSASTPKTAAARS. 2 stretches are compositionally biased toward acidic residues: residues 676–686 and 723–751; these read LEGEESLDDID and DADDALSSDEEEEEAEDEELDEMDVEGDD.

Component of the chromatin-remodeling INO80 complex.

It localises to the nucleus. In terms of biological role, probably involved in transcription regulation via its interaction with the INO80 complex, a chromatin-remodeling complex. This is Ino eighty subunit 1 from Emericella nidulans (strain FGSC A4 / ATCC 38163 / CBS 112.46 / NRRL 194 / M139) (Aspergillus nidulans).